The sequence spans 726 residues: Bromodomain-containing protein 3 (726 aa).

The segment at 1-35 (MSTATTVAPAGIPATPGPVNPPPPEVSNPSKPGRK) is disordered. Ser2 carries the post-translational modification N-acetylserine. Positions 15 to 26 (TPGPVNPPPPEV) are enriched in pro residues. In terms of domain architecture, Bromo 1 spans 34–140 (RKTNQLQYMQ…KIFLQKVAQM (107 aa)). The tract at residues 78–80 (KNP) is acetylated histone H3 binding. 2 disordered regions span residues 149–169 (PPAPKGKGRKPAAGAQSAGTQ) and 237–305 (VKKK…AGKK). A compositionally biased stretch (low complexity) spans 248–261 (TTTPTTSAITASRS). A phosphoserine mark is found at Ser263 and Ser281. The 110-residue stretch at 306-415 (GKLSEHLRYC…DVFEMRFAKM (110 aa)) folds into the Bromo 2 domain. Lys414 is covalently cross-linked (Glycyl lysine isopeptide (Lys-Gly) (interchain with G-Cter in SUMO2)). Disordered regions lie at residues 421-462 (EAPA…RATR), 477-575 (LAAL…MSYD), and 637-726 (LQKK…SDSE). The stretch at 453–524 (SDSEEERATR…AEEEKKAKVA (72 aa)) forms a coiled coil. Over residues 487 to 503 (KPKKKKEKKEKEKKKKD) the composition is skewed to basic residues. A compositionally biased stretch (basic and acidic residues) spans 504–521 (KEKEKEKHKVKAEEEKKA). Over residues 523 to 540 (VAPPAKQAQQKKAPAKKA) the composition is skewed to low complexity. Residues 562-644 (DSEEEEEGLP…SCLQKKQRKP (83 aa)) form the NET domain. Position 563 is a phosphoserine (Ser563). Positions 645–684 (FSASGKKQAAKSKEELAQEKKKELEKRLQDVSGQLSSSKK) form a coiled coil. Residues 655–673 (KSKEELAQEKKKELEKRLQ) show a composition bias toward basic and acidic residues. Residues 692–726 (GSAPSGGPSRLSSSSSSESGSSSSSGSSSDSSDSE) are compositionally biased toward low complexity.

It belongs to the BET family. As to quaternary structure, interacts (via bromo domain 1) with GATA1 acetylated at 'Lys-312' and 'Lys-315'. Interacts (via bromo domain 1) with GATA2 acetylated on lysine residues. Interacts (via NET domain) with CHD4 (via KIKL motif). Interacts (via NET domain) with SMARCA4 (via KIKL motif). Interacts (via NET domain) with NSD3 (via KIKL motif). In terms of assembly, (Microbial infection) Interacts with the Integrase protein of Moloney murine leukemia virus (MLV). As to expression, ubiquitous.

Its subcellular location is the nucleus. The protein localises to the chromosome. With respect to regulation, inhibited by JQ1, a thieno-triazolo-1,4-diazepine derivative, which specifically inhibits members of the BET family (BRD2, BRD3 and BRD4). The first bromo domain is inhibited by GSK778 (iBET-BD1), which specifically inhibits the first bromo domain of members of the BET family (BRD2, BRD3 and BRD4). The second bromo domain is inhibited by ABBV-744, which specifically inhibits the second bromo domain of members of the BET family (BRD2, BRD3 and BRD4). The second bromo domain is inhibited by GSK046 (iBET-BD2), which specifically inhibits the second bromo domain of members of the BET family (BRD2, BRD3 and BRD4). Its function is as follows. Chromatin reader that recognizes and binds acetylated histones, thereby controlling gene expression and remodeling chromatin structures. Recruits transcription factors and coactivators to target gene sites, and activates RNA polymerase II machinery for transcriptional elongation. In vitro, binds acetylated lysine residues on the N-terminus of histone H2A, H2B, H3 and H4. Involved in endoderm differentiation via its association with long non-coding RNA (lncRNA) DIGIT: BRD3 undergoes liquid-liquid phase separation upon binding to lncRNA DIGIT, promoting binding to histone H3 acetylated at 'Lys-18' (H3K18ac) to induce endoderm gene expression. Also binds non-histones acetylated proteins, such as GATA1 and GATA2: regulates transcription by promoting the binding of the transcription factor GATA1 to its targets. The protein is Bromodomain-containing protein 3 of Homo sapiens (Human).